Reading from the N-terminus, the 146-residue chain is Hemoglobin subunit beta (146 aa).

Residue Val1 is modified to N-acetylvaline. In terms of domain architecture, Globin spans 2–146 (HLSGEEKAAV…VANALAHKYH (145 aa)). Thr12 is modified (phosphothreonine). Ser44 bears the Phosphoserine mark. Lys59 bears the N6-acetyllysine mark. His63 provides a ligand contact to heme b. The residue at position 82 (Lys82) is an N6-acetyllysine. His92 provides a ligand contact to heme b. S-nitrosocysteine is present on Cys93. N6-acetyllysine is present on Lys144.

It belongs to the globin family. In terms of assembly, heterotetramer of two alpha chains and two beta chains. In terms of tissue distribution, red blood cells.

Involved in oxygen transport from the lung to the various peripheral tissues. This chain is Hemoglobin subunit beta (HBB), found in Tupaia glis (Common tree shrew).